The sequence spans 542 residues: Chaperonin GroEL 1 (542 aa).

ATP is bound by residues 30-33 (TLGP), Lys51, 87-91 (DGTTT), Gly415, 480-482 (NAA), and Asp496.

Belongs to the chaperonin (HSP60) family. Forms a cylinder of 14 subunits composed of two heptameric rings stacked back-to-back. Interacts with the co-chaperonin GroES.

The protein localises to the cytoplasm. The enzyme catalyses ATP + H2O + a folded polypeptide = ADP + phosphate + an unfolded polypeptide.. In terms of biological role, together with its co-chaperonin GroES, plays an essential role in assisting protein folding. The GroEL-GroES system forms a nano-cage that allows encapsulation of the non-native substrate proteins and provides a physical environment optimized to promote and accelerate protein folding. The polypeptide is Chaperonin GroEL 1 (Nitrobacter winogradskyi (strain ATCC 25391 / DSM 10237 / CIP 104748 / NCIMB 11846 / Nb-255)).